Reading from the N-terminus, the 149-residue chain is D-aminoacyl-tRNA deacylase (149 aa).

Residues 137–138 carry the Gly-cisPro motif, important for rejection of L-amino acids motif; sequence GP.

This sequence belongs to the DTD family. In terms of assembly, homodimer.

It localises to the cytoplasm. It carries out the reaction glycyl-tRNA(Ala) + H2O = tRNA(Ala) + glycine + H(+). The enzyme catalyses a D-aminoacyl-tRNA + H2O = a tRNA + a D-alpha-amino acid + H(+). Its function is as follows. An aminoacyl-tRNA editing enzyme that deacylates mischarged D-aminoacyl-tRNAs. Also deacylates mischarged glycyl-tRNA(Ala), protecting cells against glycine mischarging by AlaRS. Acts via tRNA-based rather than protein-based catalysis; rejects L-amino acids rather than detecting D-amino acids in the active site. By recycling D-aminoacyl-tRNA to D-amino acids and free tRNA molecules, this enzyme counteracts the toxicity associated with the formation of D-aminoacyl-tRNA entities in vivo and helps enforce protein L-homochirality. In Koribacter versatilis (strain Ellin345), this protein is D-aminoacyl-tRNA deacylase.